A 270-amino-acid polypeptide reads, in one-letter code: Extracellular metalloprotease MCYG_04966 (270 aa).

The first 19 residues, 1-19, serve as a signal peptide directing secretion; it reads MRLSLFLSGLAAAGSIVSA. A glycan (N-linked (GlcNAc...) asparagine) is linked at N135. H184 provides a ligand contact to Zn(2+). Residue E185 is part of the active site. H188 lines the Zn(2+) pocket. N-linked (GlcNAc...) asparagine glycosylation occurs at N199. The segment at 208–227 is disordered; that stretch reads VADTPPQSKKTSGCPNSQDS. A compositionally biased stretch (polar residues) spans 212-227; sequence PPQSKKTSGCPNSQDS. C221 and C247 are joined by a disulfide.

The protein belongs to the peptidase M43B family.

It is found in the secreted. Secreted metalloproteinase that allows assimilation of proteinaceous substrates. Plays a pivotal role as a pathogenicity determinant during infections and contributes to the ability of the pathogen to persist within the mammalian host. This Arthroderma otae (strain ATCC MYA-4605 / CBS 113480) (Microsporum canis) protein is Extracellular metalloprotease MCYG_04966.